A 161-amino-acid polypeptide reads, in one-letter code: Large ribosomal subunit protein mL50 (161 aa).

Residues 27-51 (WGGHSKKEEKEVEENSIIPQEKKEP) are disordered.

The protein belongs to the mitochondrion-specific ribosomal protein mL50 family. Component of the mitochondrial ribosome large subunit (39S) which comprises a 16S rRNA and about 50 distinct proteins.

Its subcellular location is the mitochondrion. The chain is Large ribosomal subunit protein mL50 (MRPL50) from Gallus gallus (Chicken).